Reading from the N-terminus, the 472-residue chain is MAGGVTGGGSATWSDRFEQGLHPAIERFNASIGFDITLLQEDLDGSIAHARMLADCGVIQVEEADQLVGGLEQVRQEAASGLFQPGLADEDVHFAVERRLIALLGPVGKKLHTGRSRNDQVGTDLRLWLRRRLDELEQHLLGFQRALLDQANLHSNTLIPGYTHLQRAQPLCLAHHLLAYVEMVERDRQRMADLRKRLNLSPLGAAALAGTPVPIDRRSTASALGFDGIYANSLDAVSDRDFTVEFSAAASLVMVHLSRLAEEVIFWASEECGFVRLTDRCATGSSLMPQKKNPDVPELVRGKCGRVFGHLQGLLTMIKGLPLAYNKDFQEDKEALFDVVATTSQCLEAMTILLQEGLSFRTERLEAAVAADYSNATDVADYLVAKQVPFREAYQLVGAVVKHCLQEGVLLRELTLERWQQFHPAIEADLFEALTPRNVVAARTSEGGTGFDRVNEQLAIWNQRFGLADQVF.

Belongs to the lyase 1 family. Argininosuccinate lyase subfamily.

Its subcellular location is the cytoplasm. It catalyses the reaction 2-(N(omega)-L-arginino)succinate = fumarate + L-arginine. Its pathway is amino-acid biosynthesis; L-arginine biosynthesis; L-arginine from L-ornithine and carbamoyl phosphate: step 3/3. In Synechococcus sp. (strain CC9311), this protein is Argininosuccinate lyase.